The sequence spans 106 residues: CRISPR-associated endoribonuclease Cas2 (106 aa).

A Mg(2+)-binding site is contributed by Asp8. The segment at 86-106 (EEAAEAAVSYPGRSRKKARAG) is disordered.

Belongs to the CRISPR-associated endoribonuclease Cas2 protein family. As to quaternary structure, homodimer, forms a heterotetramer with a Cas1 homodimer. The cofactor is Mg(2+).

Its function is as follows. CRISPR (clustered regularly interspaced short palindromic repeat), is an adaptive immune system that provides protection against mobile genetic elements (viruses, transposable elements and conjugative plasmids). CRISPR clusters contain sequences complementary to antecedent mobile elements and target invading nucleic acids. CRISPR clusters are transcribed and processed into CRISPR RNA (crRNA). Functions as a ssRNA-specific endoribonuclease. Involved in the integration of spacer DNA into the CRISPR cassette. The sequence is that of CRISPR-associated endoribonuclease Cas2 from Desulforudis audaxviator (strain MP104C).